The primary structure comprises 312 residues: Acetyl-coenzyme A carboxylase carboxyl transferase subunit alpha (312 aa).

The 251-residue stretch at 36 to 286 (NLEKEISKTY…ADYVKKSLNE (251 aa)) folds into the CoA carboxyltransferase C-terminal domain.

It belongs to the AccA family. Acetyl-CoA carboxylase is a heterohexamer composed of biotin carboxyl carrier protein (AccB), biotin carboxylase (AccC) and two subunits each of ACCase subunit alpha (AccA) and ACCase subunit beta (AccD).

It localises to the cytoplasm. It catalyses the reaction N(6)-carboxybiotinyl-L-lysyl-[protein] + acetyl-CoA = N(6)-biotinyl-L-lysyl-[protein] + malonyl-CoA. It functions in the pathway lipid metabolism; malonyl-CoA biosynthesis; malonyl-CoA from acetyl-CoA: step 1/1. In terms of biological role, component of the acetyl coenzyme A carboxylase (ACC) complex. First, biotin carboxylase catalyzes the carboxylation of biotin on its carrier protein (BCCP) and then the CO(2) group is transferred by the carboxyltransferase to acetyl-CoA to form malonyl-CoA. The chain is Acetyl-coenzyme A carboxylase carboxyl transferase subunit alpha from Campylobacter jejuni (strain RM1221).